The sequence spans 115 residues: U3-lycotoxin-Ls1l (115 aa).

A signal peptide spans 1–20 (MKFVLLFGVLLVTLFSYSSA). Positions 21-44 (EMLDDFDQADEDELLSLIEKEEAR) are excised as a propeptide. Intrachain disulfides connect Cys-55/Cys-72, Cys-62/Cys-87, and Cys-74/Cys-85.

It belongs to the neurotoxin 19 (CSTX) family. 01 subfamily. As to expression, expressed by the venom gland.

It is found in the secreted. This chain is U3-lycotoxin-Ls1l, found in Lycosa singoriensis (Wolf spider).